The sequence spans 336 residues: Probable ADP-ribosylation factor GTPase-activating protein AGD13 (336 aa).

The 123-residue stretch at 15–137 folds into the Arf-GAP domain; sequence KRRIRDLLNQ…EFLKPSLRIT (123 aa). The segment at 30–53 adopts a C4-type zinc-finger fold; the sequence is CADCGASDPKWASANIGVFICLKC. Residues 162 to 280 form the C2 domain; that stretch reads RTNSSSQTMF…AMAFGDPEMF (119 aa). Ca(2+) contacts are provided by aspartate 249, serine 252, and aspartate 255.

Ca(2+) serves as cofactor.

Functionally, GTPase-activating protein (GAP) for ADP ribosylation factor (ARF). This Arabidopsis thaliana (Mouse-ear cress) protein is Probable ADP-ribosylation factor GTPase-activating protein AGD13 (AGD13).